A 526-amino-acid chain; its full sequence is Nucleobase-ascorbate transporter 4 (526 aa).

12 helical membrane passes run 42–62 (IVML…MGGG), 69–89 (VINT…LFGS), 91–111 (LPVV…ITFS), 131–151 (IQGA…FGLW), 157–177 (FLSP…LLAF), 186–206 (IEIG…LPHL), 217–237 (FAVL…TAAG), 282–302 (AFAM…SFIA), 359–381 (RVVQ…GAVL), 388–410 (IFAA…LLQF), 420–440 (FILG…TEYL), and 457–477 (VIMQ…AFLL).

It belongs to the nucleobase:cation symporter-2 (NCS2) (TC 2.A.40) family. Highly expressed in the root central cylinder. Expressed in the filaments and stigmatic papillae of pollinated flowers and developing siliques.

Its subcellular location is the membrane. The sequence is that of Nucleobase-ascorbate transporter 4 (NAT4) from Arabidopsis thaliana (Mouse-ear cress).